Reading from the N-terminus, the 936-residue chain is Protein SIEL (936 aa).

As to quaternary structure, interacts with SHR, MGP, SCR, JKD, CPC, TMO7 and AGL21, but not with LFY or STM.

The protein resides in the nucleus. Its subcellular location is the endosome. It localises to the cytoplasm. It is found in the cell cortex. Functionally, intracellular shuttle that promotes movement of SHR from the stele into the endodermis. Required for SHR association to endosomes and localization, and for intercellular movement of SHR. In Arabidopsis thaliana (Mouse-ear cress), this protein is Protein SIEL.